Consider the following 337-residue polypeptide: Anthranilate phosphoribosyltransferase (337 aa).

Residues Gly-78, 81–82, Thr-86, 88–91, 106–114, and Ser-118 contribute to the 5-phospho-alpha-D-ribose 1-diphosphate site; these read GD, NIST, and KHGNRSVSS. An anthranilate-binding site is contributed by Gly-78. Ser-90 serves as a coordination point for Mg(2+). Residue Asn-109 coordinates anthranilate. Position 164 (Arg-164) interacts with anthranilate. Residues Asp-222 and Glu-223 each coordinate Mg(2+).

This sequence belongs to the anthranilate phosphoribosyltransferase family. In terms of assembly, homodimer. It depends on Mg(2+) as a cofactor.

The catalysed reaction is N-(5-phospho-beta-D-ribosyl)anthranilate + diphosphate = 5-phospho-alpha-D-ribose 1-diphosphate + anthranilate. It functions in the pathway amino-acid biosynthesis; L-tryptophan biosynthesis; L-tryptophan from chorismate: step 2/5. Functionally, catalyzes the transfer of the phosphoribosyl group of 5-phosphorylribose-1-pyrophosphate (PRPP) to anthranilate to yield N-(5'-phosphoribosyl)-anthranilate (PRA). The polypeptide is Anthranilate phosphoribosyltransferase (Idiomarina loihiensis (strain ATCC BAA-735 / DSM 15497 / L2-TR)).